Consider the following 376-residue polypeptide: Queuine tRNA-ribosyltransferase (376 aa).

The Proton acceptor role is filled by Asp-92. Substrate is bound by residues 92-96, Asp-146, Gln-190, and Gly-217; that span reads DSGGF. The RNA binding stretch occupies residues 248 to 254; it reads GVGRPED. The Nucleophile role is filled by Asp-267. Residues 272-276 are RNA binding; important for wobble base 34 recognition; that stretch reads TRNAR. Residues Cys-305, Cys-307, Cys-310, and His-337 each contribute to the Zn(2+) site.

The protein belongs to the queuine tRNA-ribosyltransferase family. In terms of assembly, homodimer. Within each dimer, one monomer is responsible for RNA recognition and catalysis, while the other monomer binds to the replacement base PreQ1. Requires Zn(2+) as cofactor.

It carries out the reaction 7-aminomethyl-7-carbaguanine + guanosine(34) in tRNA = 7-aminomethyl-7-carbaguanosine(34) in tRNA + guanine. It participates in tRNA modification; tRNA-queuosine biosynthesis. Catalyzes the base-exchange of a guanine (G) residue with the queuine precursor 7-aminomethyl-7-deazaguanine (PreQ1) at position 34 (anticodon wobble position) in tRNAs with GU(N) anticodons (tRNA-Asp, -Asn, -His and -Tyr). Catalysis occurs through a double-displacement mechanism. The nucleophile active site attacks the C1' of nucleotide 34 to detach the guanine base from the RNA, forming a covalent enzyme-RNA intermediate. The proton acceptor active site deprotonates the incoming PreQ1, allowing a nucleophilic attack on the C1' of the ribose to form the product. After dissociation, two additional enzymatic reactions on the tRNA convert PreQ1 to queuine (Q), resulting in the hypermodified nucleoside queuosine (7-(((4,5-cis-dihydroxy-2-cyclopenten-1-yl)amino)methyl)-7-deazaguanosine). This chain is Queuine tRNA-ribosyltransferase, found in Stenotrophomonas maltophilia (strain R551-3).